Reading from the N-terminus, the 609-residue chain is Ovochymase-2 (609 aa).

The signal sequence occupies residues 1–22 (MPISKDKLILILGMVCLEQGHS). A propeptide spans 23 to 51 (ETLSSIRNPDCGQSLVKPQPQNYFSLFSR) (activation peptide). The region spanning 52-299 (IVGGSQVEKG…VLPWILKHIQ (248 aa)) is the Peptidase S1 domain. Residues cysteine 77 and cysteine 93 are joined by a disulfide bond. Histidine 92 serves as the catalytic Charge relay system. Asparagine 104 is a glycosylation site (N-linked (GlcNAc...) asparagine). Ca(2+) is bound at residue glutamate 119. The active-site Charge relay system is the aspartate 142. Intrachain disulfides connect cysteine 176-cysteine 246, cysteine 207-cysteine 225, cysteine 236-cysteine 265, and cysteine 311-cysteine 341. Serine 240 (charge relay system) is an active-site residue. CUB domains follow at residues 311-421 (CSEP…YKAL) and 431-543 (CRSL…ISFI). N-linked (GlcNAc...) asparagine glycosylation is present at asparagine 356. A disulfide bridge links cysteine 365 with cysteine 384. Asparagine 415 carries N-linked (GlcNAc...) asparagine glycosylation. 2 cysteine pairs are disulfide-bonded: cysteine 431/cysteine 458 and cysteine 485/cysteine 506. 2 N-linked (GlcNAc...) asparagine glycosylation sites follow: asparagine 530 and asparagine 549. The segment at 580–609 (HTKPPYEEDIGEMPAIDSGLLKQGERRGKH) is disordered.

Belongs to the peptidase S1 family. Only expressed in uterus tissue. Expressed in the initial segment (IS) of the caput epididymis, the region most proximal to the testis.

It localises to the secreted. In terms of biological role, may be required for sperm ADAM3 processing and consequential sperm fertilizing ability. In vitro, has an endopeptidase activity. This Mus musculus (Mouse) protein is Ovochymase-2.